A 514-amino-acid chain; its full sequence is Cobyric acid synthase (514 aa).

Residues 263–457 (ALDVAVIRLP…LHGIFDNDPL (195 aa)) form the GATase cobBQ-type domain. Cysteine 344 (nucleophile) is an active-site residue. Histidine 449 is an active-site residue.

Belongs to the CobB/CobQ family. CobQ subfamily.

It functions in the pathway cofactor biosynthesis; adenosylcobalamin biosynthesis. Its function is as follows. Catalyzes amidations at positions B, D, E, and G on adenosylcobyrinic A,C-diamide. NH(2) groups are provided by glutamine, and one molecule of ATP is hydrogenolyzed for each amidation. The protein is Cobyric acid synthase of Desulfitobacterium hafniense (strain DSM 10664 / DCB-2).